The following is a 122-amino-acid chain: Basic phospholipase A2 PL-X (122 aa).

7 disulfide bridges follow: Cys-26–Cys-115, Cys-28–Cys-44, Cys-43–Cys-95, Cys-49–Cys-122, Cys-50–Cys-88, Cys-57–Cys-81, and Cys-75–Cys-86. Ca(2+)-binding residues include Tyr-27, Gly-29, and Gly-31. The active site involves His-47. Asp-48 lines the Ca(2+) pocket. The active site involves Asp-89.

Belongs to the phospholipase A2 family. Group II subfamily. D49 sub-subfamily. It depends on Ca(2+) as a cofactor. In terms of tissue distribution, expressed by the venom gland.

Its subcellular location is the secreted. The enzyme catalyses a 1,2-diacyl-sn-glycero-3-phosphocholine + H2O = a 1-acyl-sn-glycero-3-phosphocholine + a fatty acid + H(+). Functionally, PLA2 catalyzes the calcium-dependent hydrolysis of the 2-acyl groups in 3-sn-phosphoglycerides. This chain is Basic phospholipase A2 PL-X, found in Protobothrops flavoviridis (Habu).